Reading from the N-terminus, the 311-residue chain is LOB domain-containing protein 10 (311 aa).

In terms of domain architecture, LOB spans 4–105; sequence TPCAACKLLR…QDLLTAKEEL (102 aa). Residues 264–277 show a composition bias toward low complexity; sequence LQEGQEQTEEGQFL. The interval 264–311 is disordered; that stretch reads LQEGQEQTEEGQFLMQPMGQENLHDEEEEEELEPPVKWRMSENKEASF. Positions 287 to 296 are enriched in acidic residues; the sequence is HDEEEEEELE. Residues 297–311 show a composition bias toward basic and acidic residues; it reads PPVKWRMSENKEASF.

Belongs to the LOB domain-containing protein family.

The protein is LOB domain-containing protein 10 (LBD10) of Arabidopsis thaliana (Mouse-ear cress).